A 354-amino-acid polypeptide reads, in one-letter code: uncharacterized protein (354 aa).

A helical transmembrane segment spans residues 43 to 63; that stretch reads LIAVTLWSCVGSLLFICLLAV.

The protein localises to the cell membrane. This is an uncharacterized protein from Bacillus subtilis (strain 168).